The sequence spans 139 residues: Large ribosomal subunit protein uL16 (139 aa).

Belongs to the universal ribosomal protein uL16 family. Part of the 50S ribosomal subunit.

Binds 23S rRNA and is also seen to make contacts with the A and possibly P site tRNAs. The protein is Large ribosomal subunit protein uL16 of Protochlamydia amoebophila (strain UWE25).